We begin with the raw amino-acid sequence, 3563 residues long: D-lysergyl-peptide-synthetase subunit 1 (3563 aa).

Residues 307-706 (SCSPRPNPQA…LGRKDDQVKI (400 aa)) are adenylation (A) domain 1. Positions 844–921 (EPKSDREKLL…EIVIVSTSAT (78 aa)) constitute a Carrier 1 domain. An O-(pantetheine 4'-phosphoryl)serine modification is found at serine 881. The condensation (C) domain 1 stretch occupies residues 963-1354 (EDIYPCTHLQ…EHILTEIHSN (392 aa)). The tract at residues 1397-1804 (QEKCQAQPDA…RRKDAQVKIR (408 aa)) is adenylation (A) domain 2. One can recognise a Carrier 2 domain in the interval 1944-2020 (PPSNATEHEI…KLALARGVTQ (77 aa)). An O-(pantetheine 4'-phosphoryl)serine modification is found at serine 1981. The tract at residues 2067 to 2486 (ERIYPCSPIQ…ALPVLDEDQM (420 aa)) is condensation (C) domain 2. Residues 2511 to 2909 (QCIRCPDSPS…GRNDDQVKVR (399 aa)) form an adenylation (A) domain 3 region. One can recognise a Carrier 3 domain in the interval 3025 to 3104 (PPRTALEAEL…RFGSYRRAGA (80 aa)). O-(pantetheine 4'-phosphoryl)serine is present on serine 3064. The cyclization (Cyc) domain stretch occupies residues 3166 to 3451 (LYFSKPMASE…VAKSTTWSSD (286 aa)).

This sequence belongs to the NRP synthetase family.

Its pathway is alkaloid biosynthesis; ergot alkaloid biosynthesis. Its function is as follows. D-lysergyl-peptide-synthetase subunit 1; part of the gene cluster that mediates the biosynthesis of fungal ergot alkaloid. DmaW catalyzes the first step of ergot alkaloid biosynthesis by condensing dimethylallyl diphosphate (DMAP) and tryptophan to form 4-dimethylallyl-L-tryptophan. The second step is catalyzed by the methyltransferase easF that methylates 4-dimethylallyl-L-tryptophan in the presence of S-adenosyl-L-methionine, resulting in the formation of 4-dimethylallyl-L-abrine. The catalase easC and the FAD-dependent oxidoreductase easE then transform 4-dimethylallyl-L-abrine to chanoclavine-I which is further oxidized by easD in the presence of NAD(+), resulting in the formation of chanoclavine-I aldehyde. Agroclavine dehydrogenase easG then mediates the conversion of chanoclavine-I aldehyde to agroclavine via a non-enzymatic adduct reaction: the substrate is an iminium intermediate that is formed spontaneously from chanoclavine-I aldehyde in the presence of glutathione. The presence of easA is not required to complete this reaction. Further conversion of agroclavine to paspalic acid is a two-step process involving oxidation of agroclavine to elymoclavine and of elymoclavine to paspalic acid, the second step being performed by the elymoclavine oxidase cloA. Paspalic acid is then further converted to D-lysergic acid. Ergopeptines are assembled from D-lysergic acid and three different amino acids by the D-lysergyl-peptide-synthetases composed each of a monomudular and a trimodular nonribosomal peptide synthetase subunit. LpsB and lpsC encode the monomodular subunits responsible for D-lysergic acid activation and incorporation into the ergopeptine backbone. LpsA1 and A2 subunits encode the trimodular nonribosomal peptide synthetase assembling the tripeptide portion of ergopeptines. LpsA1 is responsible for formation of the major ergopeptine, ergotamine, and lpsA2 for alpha-ergocryptine, the minor ergopeptine of the total alkaloid mixture elaborated by C.purpurea. D-lysergyl-tripeptides are assembled by the nonribosomal peptide synthetases and released as N-(D-lysergyl-aminoacyl)-lactams. Cyclolization of the D-lysergyl-tripeptides is performed by the Fe(2+)/2-ketoglutarate-dependent dioxygenase easH which introduces a hydroxyl group into N-(D-lysergyl-aminoacyl)-lactam at alpha-C of the aminoacyl residue followed by spontaneous condensation with the terminal lactam carbonyl group. This is D-lysergyl-peptide-synthetase subunit 1 from Claviceps purpurea (Ergot fungus).